A 310-amino-acid polypeptide reads, in one-letter code: ADP-L-glycero-D-manno-heptose-6-epimerase (310 aa).

NADP(+) is bound by residues 10–11 (FI), 31–32 (DN), Lys38, Lys53, 75–79 (EGACS), and Asn92. Tyr140 functions as the Proton acceptor in the catalytic mechanism. Lys144 serves as a coordination point for NADP(+). Substrate is bound at residue Asn169. NADP(+) is bound by residues Val170 and Lys178. Residue Lys178 is the Proton acceptor of the active site. Residues Ser180, His187, 201 to 204 (FEGS), and Arg209 contribute to the substrate site. At Lys267 the chain carries N6-acetyllysine. Position 272 (Tyr272) interacts with substrate.

This sequence belongs to the NAD(P)-dependent epimerase/dehydratase family. HldD subfamily. In terms of assembly, homopentamer. It depends on NADP(+) as a cofactor.

It carries out the reaction ADP-D-glycero-beta-D-manno-heptose = ADP-L-glycero-beta-D-manno-heptose. Its pathway is nucleotide-sugar biosynthesis; ADP-L-glycero-beta-D-manno-heptose biosynthesis; ADP-L-glycero-beta-D-manno-heptose from D-glycero-beta-D-manno-heptose 7-phosphate: step 4/4. Its function is as follows. Catalyzes the interconversion between ADP-D-glycero-beta-D-manno-heptose and ADP-L-glycero-beta-D-manno-heptose via an epimerization at carbon 6 of the heptose. This is ADP-L-glycero-D-manno-heptose-6-epimerase from Shigella boydii serotype 18 (strain CDC 3083-94 / BS512).